Here is a 236-residue protein sequence, read N- to C-terminus: UPF0502 protein Bcep1808_3727 (236 aa).

This sequence belongs to the UPF0502 family.

The sequence is that of UPF0502 protein Bcep1808_3727 from Burkholderia vietnamiensis (strain G4 / LMG 22486) (Burkholderia cepacia (strain R1808)).